Reading from the N-terminus, the 31-residue chain is Cytochrome b6-f complex subunit 6 (31 aa).

The helical transmembrane segment at Ile-4–Ser-26 threads the bilayer.

Belongs to the PetL family. The 4 large subunits of the cytochrome b6-f complex are cytochrome b6, subunit IV (17 kDa polypeptide, PetD), cytochrome f and the Rieske protein, while the 4 small subunits are PetG, PetL, PetM and PetN. The complex functions as a dimer.

It localises to the plastid. It is found in the chloroplast thylakoid membrane. Its function is as follows. Component of the cytochrome b6-f complex, which mediates electron transfer between photosystem II (PSII) and photosystem I (PSI), cyclic electron flow around PSI, and state transitions. PetL is important for photoautotrophic growth as well as for electron transfer efficiency and stability of the cytochrome b6-f complex. This is Cytochrome b6-f complex subunit 6 from Acorus calamus (Sweet flag).